A 630-amino-acid chain; its full sequence is Terpinolene synthase, chloroplastic (630 aa).

The N-terminal 52 residues, 1–52 (MALVSILPLSSKSVLHKSWIVSTYEHKAISRTIPNLGLRGRGKSVTHSLRMS), are a transit peptide targeting the chloroplast. Residues Asp381, Asp385, Asn525, and Asp533 each coordinate Mg(2+). The short motif at 381-385 (DDIYD) is the DDXXD motif element.

Belongs to the terpene synthase family. Tpsd subfamily. It depends on Mg(2+) as a cofactor. Requires Mn(2+) as cofactor. K(+) serves as cofactor.

The protein localises to the plastid. It localises to the chloroplast. The enzyme catalyses (2E)-geranyl diphosphate = terpinolene + diphosphate. The protein operates within terpene metabolism; oleoresin biosynthesis. Functionally, involved in defensive oleoresin formation in conifers in response to insect attack or other injury. Involved in monoterpene (C10) olefins biosynthesis. The chain is Terpinolene synthase, chloroplastic (ag9) from Abies grandis (Grand fir).